A 92-amino-acid chain; its full sequence is Small ribosomal subunit protein uS19 (92 aa).

Belongs to the universal ribosomal protein uS19 family.

Functionally, protein S19 forms a complex with S13 that binds strongly to the 16S ribosomal RNA. This Bifidobacterium adolescentis (strain ATCC 15703 / DSM 20083 / NCTC 11814 / E194a) protein is Small ribosomal subunit protein uS19.